The sequence spans 417 residues: UPF0761 membrane protein Veis_3782 (417 aa).

A run of 6 helical transmembrane segments spans residues 54–74 (ILALVPFFTVALAVFTAFPIF), 111–131 (GLGLAGFSVLLVTALALILTI), 151–171 (VLIYWAAITLGPLLLGASLAL), 192–212 (FLFDSLQFMVLAAGMALLYHY), 226–246 (GGLFVALCIELAKKALALYLG), and 261–281 (LPILLVWIYMAWVIVLLGAVV).

This sequence belongs to the UPF0761 family.

It localises to the cell inner membrane. In Verminephrobacter eiseniae (strain EF01-2), this protein is UPF0761 membrane protein Veis_3782.